Here is a 1687-residue protein sequence, read N- to C-terminus: Helicase sen1 (1687 aa).

The interval 781-801 (VIKPSPTPQITVKQNTTKSSS) is disordered. The span at 788–801 (PQITVKQNTTKSSS) shows a compositional bias: polar residues. ATP contacts are provided by residues glutamine 1134, 1155–1159 (GTGKT), glutamine 1407, tyrosine 1445, and glutamate 1574. Residues 1661–1687 (MKNEEFVEPPSKKLANSEPSKEIRQRS) are disordered.

Belongs to the DNA2/NAM7 helicase family. In terms of assembly, monomer.

The protein localises to the nucleus. In terms of biological role, ATP-dependent 5'-&gt;3' DNA/RNA helicase required for the expression and maturation of diverse classes of non-protein-coding RNAs like precursor tRNAs, rRNAs and small nuclear (snRNA) and nucleolar (snoRNA) RNAs. Directs RNA polymerase II transcription termination on snoRNAs as well as on several short protein-coding genes. May also play a role in transcription-coupled nucleotide excision repair. The sequence is that of Helicase sen1 (sen1) from Schizosaccharomyces pombe (strain 972 / ATCC 24843) (Fission yeast).